The following is a 132-amino-acid chain: UPF0299 membrane protein YohJ (132 aa).

The next 4 helical transmembrane spans lie at 8–28 (IWQY…GIFI), 31–51 (LLPV…VLLA), 63–83 (GCYL…VGVM), and 93–113 (FGPV…VVSW).

It belongs to the UPF0299 family.

It localises to the cell inner membrane. This chain is UPF0299 membrane protein YohJ, found in Escherichia fergusonii (strain ATCC 35469 / DSM 13698 / CCUG 18766 / IAM 14443 / JCM 21226 / LMG 7866 / NBRC 102419 / NCTC 12128 / CDC 0568-73).